We begin with the raw amino-acid sequence, 317 residues long: Zinc finger protein 771 (317 aa).

K33 is covalently cross-linked (Glycyl lysine isopeptide (Lys-Gly) (interchain with G-Cter in SUMO2)). 8 C2H2-type zinc fingers span residues 63–85 (HACP…ARTH), 91–113 (FACT…GRTH), 119–141 (YQCP…RRRH), 147–169 (YACA…LRVH), 175–197 (YACP…RRTH), 203–225 (YACA…RRVH), 231–253 (HRCA…ARTH), and 259–281 (YPCT…RRAH).

This sequence belongs to the krueppel C2H2-type zinc-finger protein family.

The protein localises to the nucleus. May be involved in transcriptional regulation. The sequence is that of Zinc finger protein 771 (Znf771) from Mus musculus (Mouse).